The chain runs to 238 residues: Probable transcriptional regulatory protein VPA0011 (238 aa).

The protein belongs to the TACO1 family.

The protein resides in the cytoplasm. The chain is Probable transcriptional regulatory protein VPA0011 from Vibrio parahaemolyticus serotype O3:K6 (strain RIMD 2210633).